The chain runs to 209 residues: HTLV-1 basic zipper factor (209 aa).

The disordered stretch occupies residues 41 to 165; sequence EEEETVLDGL…KEKMQELGVD (125 aa). 2 stretches are compositionally biased toward basic and acidic residues: residues 72–87 and 94–160; these read PRGETHRDRQRRAEEK and REKE…EKMQ. 3 short sequence motifs (nuclear localization signal) span residues 87–92, 116–120, and 137–141; these read KRKRKK, RRKRA, and RRERK.

This sequence belongs to the HTLV-1 HBZ protein family. Interacts with host ATF4; this interaction inhibits viral RNA transcriptional activation by preventing ATF4 binding to Tax-responsive elements. Interacts with host CREB1; this interaction inhibits host CREB1 transcriptional activity. Interacts with host JUN, JUNB and JUND. Interacts with host EP300 and CREBBP; these interactions inhibit the association of the coactivators with the viral promoter. Interacts with host UBR5; this interaction regulates HBZ protein stability. Interacts with XRCC5 and XRCC6. Interacts with IRF7 and IKBKE; this interaction modulates host interferon signaling. Ubiquitinated by host E3 ligase UBR5 leading to HBZ degradation.

It is found in the host nucleus. Enhances viral infectivity and persistence, and facilitates proliferation of HTLV-1-infected lymphocytes. Mechanistically, inhibits Tax-mediated viral replication and NF-kappa-B activation. Plays a role in allowing infected T-cells to escape the cytotoxic T-lymphocyte response by maintaining low levels of viral protein production. Also inhibits host EP300 histone acetyltransferase (HAT) activity, reducing levels of acetylated histone H3 at 'Lys-18' (H3K18ac) in infected cells. Contributes to the accumulation of chromosomal abnormalities by inhibiting double-stranded DNA breaks (DSB) repair through the NHEJ pathway. Participates in the modulation of host immune response at multiple levels contributing to abnormal interferon signaling and viral pathogenesis. This chain is HTLV-1 basic zipper factor (HBZ), found in Human T-cell leukemia virus 1 (isolate Caribbea HS-35 subtype A) (HTLV-1).